Reading from the N-terminus, the 89-residue chain is Small ribosomal subunit protein uS15 (89 aa).

The protein belongs to the universal ribosomal protein uS15 family. Part of the 30S ribosomal subunit. Forms a bridge to the 50S subunit in the 70S ribosome, contacting the 23S rRNA.

One of the primary rRNA binding proteins, it binds directly to 16S rRNA where it helps nucleate assembly of the platform of the 30S subunit by binding and bridging several RNA helices of the 16S rRNA. Its function is as follows. Forms an intersubunit bridge (bridge B4) with the 23S rRNA of the 50S subunit in the ribosome. The polypeptide is Small ribosomal subunit protein uS15 (Nitratidesulfovibrio vulgaris (strain DP4) (Desulfovibrio vulgaris)).